A 505-amino-acid polypeptide reads, in one-letter code: Peroxisome proliferator-activated receptor gamma (505 aa).

The O-linked (GlcNAc) threonine glycan is linked to T84. S112 carries the phosphoserine modification. The nuclear receptor DNA-binding region spans 136–210; it reads AIECRVCGDK…VGMSHNAIRF (75 aa). 2 consecutive NR C4-type zinc fingers follow at residues 139–159 and 176–198; these read CRVC…CEGC and CDLN…FQKC. Residues 205–280 form an interaction with FAM120B region; the sequence is HNAIRFGRMP…DKSPFVIYDM (76 aa). Residues 238-503 enclose the NR LBD domain; the sequence is DLRALAKHLY…HPLLQEIYKD (266 aa). Residue K252 forms a Glycyl lysine isopeptide (Lys-Gly) (interchain with G-Cter in ubiquitin) linkage. Rosiglitazone is bound by residues 314–317, H351, H477, and Y501; that span reads QFRS. A 9aaTAD motif is present at residues 495–503; sequence PLLQEIYKD.

Belongs to the nuclear hormone receptor family. NR1 subfamily. In terms of assembly, interacts with FOXO1 (acetylated form). Heterodimer with other nuclear receptors, such as RXRA. The heterodimer with the retinoic acid receptor RXRA is called adipocyte-specific transcription factor ARF6. Interacts with NCOA6 coactivator, leading to a strong increase in transcription of target genes. Interacts with coactivator PPARBP, leading to a mild increase in transcription of target genes. Interacts with NOCA7 in a ligand-inducible manner. Interacts with NCOA1 and NCOA2 LXXLL motifs. Interacts with ASXL1, ASXL2, DNTTIP2, FAM120B, MAP2K1/MEK1, NR0B2, PDPK1, PRDM16, PRMT2 and TGFB1I1. Interacts (when activated by agonist) with PPP5C. Interacts with HELZ2 and THRAP3; the interaction stimulates the transcriptional activity of PPARG. Interacts with PER2, the interaction is ligand dependent and blocks PPARG recruitment to target promoters. Interacts with NOCT. Interacts with ACTN4. Interacts (when in the liganded conformation) with GPS2. Interacts with CRY1 and CRY2 in a ligand-dependent manner. In the absence of hormonal ligand, interacts with TACC1. In macrophages, interacts with PAQR3 and STUB1; the interactions promote PPARG poylubiquitination and STUB1-mediated degradation. Post-translationally, O-GlcNAcylation at Thr-84 reduces transcriptional activity in adipocytes. In terms of processing, phosphorylated in basal conditions and dephosphorylated when treated with the ligand. May be dephosphorylated by PPP5C. The phosphorylated form may be inactive and dephosphorylation at Ser-112 induces adipogenic activity. Ubiquitinated by E3 ubiquitin-protein ligase complex containing FBXO9; leading to proteasomal degradation. Ubiquitinated at Lys-252 by TRIM55 leading to proteasomal degradation. Ubiquitinated by E3 ubiquitin-protein ligase STUB1/CHIP; leading to proteasomal degradation. In terms of tissue distribution, highest expression in adipose tissue. Lower in skeletal muscle, spleen, heart and liver. Also detectable in placenta, lung and ovary.

It localises to the nucleus. It is found in the cytoplasm. PDPK1 activates its transcriptional activity independently of its kinase activity. In terms of biological role, nuclear receptor that binds peroxisome proliferators such as hypolipidemic drugs and fatty acids. Once activated by a ligand, the nuclear receptor binds to DNA specific PPAR response elements (PPRE) and modulates the transcription of its target genes, such as acyl-CoA oxidase. It therefore controls the peroxisomal beta-oxidation pathway of fatty acids. Key regulator of adipocyte differentiation and glucose homeostasis. ARF6 acts as a key regulator of the tissue-specific adipocyte P2 (aP2) enhancer. Acts as a critical regulator of gut homeostasis by suppressing NF-kappa-B-mediated pro-inflammatory responses. Plays a role in the regulation of cardiovascular circadian rhythms by regulating the transcription of BMAL1 in the blood vessels. Functionally, (Microbial infection) Upon treatment with M.tuberculosis or its lipoprotein LpqH, phosphorylation of MAPK p38 and IL-6 production are modulated, probably via this protein. The chain is Peroxisome proliferator-activated receptor gamma (PPARG) from Homo sapiens (Human).